Reading from the N-terminus, the 2554-residue chain is Highly reducing polyketide synthase PKS6 (2554 aa).

The interval 1 to 48 (MGSLSAVPATNGNHAALNGSASTNGQHVNGSTHVNGNHSLNGSAQVNG) is disordered. A compositionally biased stretch (polar residues) spans 8 to 48 (PATNGNHAALNGSASTNGQHVNGSTHVNGNHSLNGSAQVNG). The 426-residue stretch at 56-481 (LEPIAVVGMS…GTNAHVVVDA (426 aa)) folds into the Ketosynthase family 3 (KS3) domain. Active-site for beta-ketoacyl synthase activity residues include C230, H367, and H407. Positions 595-913 (VFSGQGAQYP…HYTGSLKRGE (319 aa)) are malonyl-CoA:ACP transacylase (MAT) domain. Residues 981–1119 (HELLGTLVHD…GLVQVILKSE (139 aa)) form an N-terminal hotdog fold region. A dehydratase (DH) domain region spans residues 981-1281 (HELLGTLVHD…QAWGVVATKL (301 aa)). Residues 981 to 1287 (HELLGTLVHD…ATKLPDVSIG (307 aa)) form the PKS/mFAS DH domain. The active-site Proton acceptor; for dehydratase activity is H1013. A C-terminal hotdog fold region spans residues 1137–1287 (AQHIPANQFY…ATKLPDVSIG (151 aa)). Catalysis depends on D1200, which acts as the Proton donor; for dehydratase activity. The methyltransferase (CMet) domain stretch occupies residues 1451 to 1556 (VEVGAGTGSA…KTMLRPGGKL (106 aa)). The interval 1840-2153 (GVLDTIRWVD…AGKHTGKVIL (314 aa)) is enoyl reductase (ER) domain. Residues 2177–2353 (ATYLVVGGLG…TAYAVNIGAI (177 aa)) form a ketoreductase (KR) domain region. In terms of domain architecture, Carrier spans 2457 to 2534 (EAQDIICDAI…ELAEIVTKGS (78 aa)). O-(pantetheine 4'-phosphoryl)serine is present on S2494.

It participates in secondary metabolite biosynthesis. Its function is as follows. Highly reducing polyketide synthase; part of the gene cluster that mediates the biosynthesis of the lipopeptide fusaristatin A. Fusaristatin A consists of a polyketide chain linked to three amino acid residues glutamine (Gln), dehydroalanine (dehydro-Ala), and beta-aminoisobutyric acid. The biosynthesis starts with formation of a linear polyketide chain by the highly reducing polyketide synthase PKS6. The gene cluster does not contain an acyl-CoA ligase or an acyl-transferase, and it is therefore predicted that the polyketide is transferred directly to the nonribosomal peptide synthetase NRPS7. Modules 1-3 from NRPS7 incorporate dehydro-Ala, Gln, and beta-aminoisobutyric acid in the compound, which is released by cyclization. The beta-aminoisobutyric acid units are most likely not freely available to the NRPS, but can be synthesized from thymine, which requires a dehydrogenase, a monooxygenase, and an aminotransferase. The fusaristatin A cluster contains a cytochrome P450 monooxygenase (FGSG_08207) and an aminotransferase (FGSG_17085), which theoretically can perform two of the enzymatic steps. The enzymes may however also be involved in biosynthesis of dehydroalanine or modification of the polyketide. The dehydro-Ala residue can be a result of cyclization, where serine is dehydrated. The last gene of the cluster encodes a protein with an A/B barrel domain found in variable enzymes, which hampers functional prediction. The sequence is that of Highly reducing polyketide synthase PKS6 from Gibberella zeae (strain ATCC MYA-4620 / CBS 123657 / FGSC 9075 / NRRL 31084 / PH-1) (Wheat head blight fungus).